Consider the following 250-residue polypeptide: Probable phosphatase VPA1527 (250 aa).

Histidine 8, histidine 10, histidine 16, histidine 41, glutamate 74, histidine 102, histidine 132, aspartate 194, and histidine 196 together coordinate Zn(2+).

The protein belongs to the PHP family. The cofactor is Zn(2+).

The polypeptide is Probable phosphatase VPA1527 (Vibrio parahaemolyticus serotype O3:K6 (strain RIMD 2210633)).